Consider the following 285-residue polypeptide: Acetyl-coenzyme A carboxylase carboxyl transferase subunit beta (285 aa).

One can recognise a CoA carboxyltransferase N-terminal domain in the interval 29–285 (IMTKCPNCKK…ILKIHQEVSN (257 aa)). Positions 33, 36, 52, and 55 each coordinate Zn(2+). The segment at 33–55 (CPNCKKIMYTKELNENLNVCFNC) adopts a C4-type zinc-finger fold.

This sequence belongs to the AccD/PCCB family. In terms of assembly, acetyl-CoA carboxylase is a heterohexamer composed of biotin carboxyl carrier protein (AccB), biotin carboxylase (AccC) and two subunits each of ACCase subunit alpha (AccA) and ACCase subunit beta (AccD). Zn(2+) serves as cofactor.

It is found in the cytoplasm. It carries out the reaction N(6)-carboxybiotinyl-L-lysyl-[protein] + acetyl-CoA = N(6)-biotinyl-L-lysyl-[protein] + malonyl-CoA. Its pathway is lipid metabolism; malonyl-CoA biosynthesis; malonyl-CoA from acetyl-CoA: step 1/1. Functionally, component of the acetyl coenzyme A carboxylase (ACC) complex. Biotin carboxylase (BC) catalyzes the carboxylation of biotin on its carrier protein (BCCP) and then the CO(2) group is transferred by the transcarboxylase to acetyl-CoA to form malonyl-CoA. In Staphylococcus epidermidis (strain ATCC 35984 / DSM 28319 / BCRC 17069 / CCUG 31568 / BM 3577 / RP62A), this protein is Acetyl-coenzyme A carboxylase carboxyl transferase subunit beta.